We begin with the raw amino-acid sequence, 364 residues long: DNA replication and repair protein RecF (364 aa).

30-37 (GENGSGKT) lines the ATP pocket.

The protein belongs to the RecF family.

The protein resides in the cytoplasm. Functionally, the RecF protein is involved in DNA metabolism; it is required for DNA replication and normal SOS inducibility. RecF binds preferentially to single-stranded, linear DNA. It also seems to bind ATP. The chain is DNA replication and repair protein RecF from Xylella fastidiosa (strain M23).